The primary structure comprises 343 residues: Hydroxymethylglutaryl-CoA synthase (343 aa).

Residues D28 and A29 each contribute to the (3S)-3-hydroxy-3-methylglutaryl-CoA site. Residue E80 is the Proton donor/acceptor of the active site. C112 provides a ligand contact to (3S)-3-hydroxy-3-methylglutaryl-CoA. C112 serves as the catalytic Acyl-thioester intermediate. Residue R198 participates in CoA binding. Positions 200 and 233 each coordinate (3S)-3-hydroxy-3-methylglutaryl-CoA. H233 serves as the catalytic Proton donor/acceptor. Residue K238 participates in CoA binding. Residues R242, N265, and S295 each coordinate (3S)-3-hydroxy-3-methylglutaryl-CoA.

Belongs to the thiolase-like superfamily. Archaeal HMG-CoA synthase family. As to quaternary structure, interacts with acetoacetyl-CoA thiolase that catalyzes the precedent step in the pathway and with a DUF35 protein. The acetoacetyl-CoA thiolase/HMG-CoA synthase complex channels the intermediate via a fused CoA-binding site, which allows for efficient coupling of the endergonic thiolase reaction with the exergonic HMGCS reaction.

It catalyses the reaction acetoacetyl-CoA + acetyl-CoA + H2O = (3S)-3-hydroxy-3-methylglutaryl-CoA + CoA + H(+). The protein operates within metabolic intermediate biosynthesis; (R)-mevalonate biosynthesis; (R)-mevalonate from acetyl-CoA: step 2/3. In terms of biological role, catalyzes the condensation of acetyl-CoA with acetoacetyl-CoA to form 3-hydroxy-3-methylglutaryl-CoA (HMG-CoA). Functions in the mevalonate (MVA) pathway leading to isopentenyl diphosphate (IPP), a key precursor for the biosynthesis of isoprenoid compounds that are building blocks of archaeal membrane lipids. This chain is Hydroxymethylglutaryl-CoA synthase, found in Archaeoglobus fulgidus (strain ATCC 49558 / DSM 4304 / JCM 9628 / NBRC 100126 / VC-16).